Consider the following 309-residue polypeptide: Homoserine O-acetyltransferase (309 aa).

The active-site Acyl-thioester intermediate is C142. Substrate-binding residues include K163 and S192. H235 (proton acceptor) is an active-site residue. The active site involves E237. R249 contributes to the substrate binding site.

The protein belongs to the MetA family.

Its subcellular location is the cytoplasm. It carries out the reaction L-homoserine + acetyl-CoA = O-acetyl-L-homoserine + CoA. It functions in the pathway amino-acid biosynthesis; L-methionine biosynthesis via de novo pathway; O-acetyl-L-homoserine from L-homoserine: step 1/1. In terms of biological role, transfers an acetyl group from acetyl-CoA to L-homoserine, forming acetyl-L-homoserine. The chain is Homoserine O-acetyltransferase from Petrotoga mobilis (strain DSM 10674 / SJ95).